The chain runs to 354 residues: Uroporphyrinogen decarboxylase (354 aa).

Residues 27 to 31 (RQAGR), Asp77, Tyr154, Thr209, and His327 contribute to the substrate site.

The protein belongs to the uroporphyrinogen decarboxylase family. Homodimer.

Its subcellular location is the cytoplasm. The catalysed reaction is uroporphyrinogen III + 4 H(+) = coproporphyrinogen III + 4 CO2. Its pathway is porphyrin-containing compound metabolism; protoporphyrin-IX biosynthesis; coproporphyrinogen-III from 5-aminolevulinate: step 4/4. Its function is as follows. Catalyzes the decarboxylation of four acetate groups of uroporphyrinogen-III to yield coproporphyrinogen-III. The chain is Uroporphyrinogen decarboxylase from Salmonella heidelberg (strain SL476).